Here is a 278-residue protein sequence, read N- to C-terminus: NAD-capped RNA hydrolase NudC (278 aa).

Arginine 84 lines the substrate pocket. The Zn(2+) site is built by cysteine 114 and cysteine 117. Glutamate 127 contacts substrate. Positions 132 and 135 each coordinate Zn(2+). Substrate is bound at residue tyrosine 140. The 125-residue stretch at 141–265 (PRLSPSMIVL…IARHLIDLYL (125 aa)) folds into the Nudix hydrolase domain. The a divalent metal cation site is built by alanine 174, glutamate 190, and glutamate 194. The Nudix box signature appears at 175 to 196 (GFVEAGESVEQCVVREVREEVG). Residue 208 to 215 (QNWPFPHS) coordinates substrate. Glutamate 235 contributes to the a divalent metal cation binding site. Alanine 257 contributes to the substrate binding site.

It belongs to the Nudix hydrolase family. NudC subfamily. Homodimer. It depends on Mg(2+) as a cofactor. Requires Mn(2+) as cofactor. Zn(2+) serves as cofactor.

It catalyses the reaction a 5'-end NAD(+)-phospho-ribonucleoside in mRNA + H2O = a 5'-end phospho-adenosine-phospho-ribonucleoside in mRNA + beta-nicotinamide D-ribonucleotide + 2 H(+). It carries out the reaction NAD(+) + H2O = beta-nicotinamide D-ribonucleotide + AMP + 2 H(+). The enzyme catalyses NADH + H2O = reduced beta-nicotinamide D-ribonucleotide + AMP + 2 H(+). Functionally, mRNA decapping enzyme that specifically removes the nicotinamide adenine dinucleotide (NAD) cap from a subset of mRNAs by hydrolyzing the diphosphate linkage to produce nicotinamide mononucleotide (NMN) and 5' monophosphate mRNA. The NAD-cap is present at the 5'-end of some mRNAs and stabilizes RNA against 5'-processing. Has preference for mRNAs with a 5'-end purine. Catalyzes the hydrolysis of a broad range of dinucleotide pyrophosphates. In Pseudomonas aeruginosa (strain LESB58), this protein is NAD-capped RNA hydrolase NudC.